The sequence spans 444 residues: Elongation factor 1-alpha (444 aa).

One can recognise a tr-type G domain in the interval 15 to 236 (KPHLNLAVIG…ALDTFQPPPR (222 aa)). The G1 stretch occupies residues 24 to 31 (GHVDNGKS). 24 to 31 (GHVDNGKS) is a binding site for GTP. Ser31 is a binding site for Mg(2+). The segment at 80-84 (GVTIE) is G2. The segment at 101–104 (DLPG) is G3. GTP is bound by residues 101 to 105 (DLPGH) and 163 to 166 (NKMD). Residues 163 to 166 (NKMD) are G4. The interval 202–204 (SAI) is G5.

This sequence belongs to the TRAFAC class translation factor GTPase superfamily. Classic translation factor GTPase family. EF-Tu/EF-1A subfamily.

It localises to the cytoplasm. The enzyme catalyses GTP + H2O = GDP + phosphate + H(+). In terms of biological role, GTP hydrolase that promotes the GTP-dependent binding of aminoacyl-tRNA to the A-site of ribosomes during protein biosynthesis. This chain is Elongation factor 1-alpha, found in Pyrobaculum islandicum (strain DSM 4184 / JCM 9189 / GEO3).